A 603-amino-acid polypeptide reads, in one-letter code: Probable lysosomal cobalamin transporter (603 aa).

Helical transmembrane passes span 13 to 33 (IWVA…ITVF), 50 to 70 (IVSL…IALV), 99 to 119 (IVYY…IPFA), 150 to 170 (IAFI…PTAA), 201 to 221 (LLMT…LALL), 318 to 338 (LFGG…MLIT), 353 to 373 (GYIL…VKAA), 381 to 401 (ILMA…IASV), and 422 to 442 (ALLI…YAVV). The N-linked (GlcNAc...) asparagine glycan is linked to Asn-509. The chain crosses the membrane as a helical span at residues 512–532 (VFGAIDFWAQFAFLTVFLLVF). Asn-543 carries N-linked (GlcNAc...) asparagine glycosylation. Residues 578-603 (AKRTVGGHPNGQGYGTSGTNGTASSR) are disordered. Over residues 585-595 (HPNGQGYGTSG) the composition is skewed to gly residues. The N-linked (GlcNAc...) asparagine glycan is linked to Asn-597.

It belongs to the LIMR family. LMBRD1 subfamily.

Its subcellular location is the lysosome membrane. Functionally, probable lysosomal cobalamin transporter. Required to export cobalamin from lysosomes allowing its conversion to cofactors. This is Probable lysosomal cobalamin transporter from Neurospora crassa (strain ATCC 24698 / 74-OR23-1A / CBS 708.71 / DSM 1257 / FGSC 987).